Reading from the N-terminus, the 323-residue chain is MTPAHPEKWPVHVVQGGVDRQLLKDCRDLLAAAEESDGNPSISEQTLVTMRAGDSADHSLLTLALYAPDEDSDPATGQDLAGFAVVVEEPDRSGVLEIAVHPSYRNQGVADRLVRALQDRRGFDGLKAWSHGNHEAAADLAARYGYAPVRELWKMRMTTAEADLPEAALPEGVSLRPFVPGQDEDAWLAVNSAAFAHHPEQGSLTRADLAARMEEDWFDPAGFLLAVDAGGRVLGFHWTKVHPRHGSHPAIGEVYVVGVAPEAQGSGLGKALTLAGIKYLQDLGLHAVMLYTDADNTPAVSLYRRLGFTRWDMDVMYGPVKEG.

Position 44 (glutamate 44) interacts with 1D-myo-inositol 2-(L-cysteinylamino)-2-deoxy-alpha-D-glucopyranoside. N-acetyltransferase domains are found at residues 77–176 (GQDL…VSLR) and 173–323 (VSLR…VKEG). 98 to 100 (IAV) is a binding site for acetyl-CoA. 1D-myo-inositol 2-(L-cysteinylamino)-2-deoxy-alpha-D-glucopyranoside-binding residues include glutamate 200, lysine 240, and glutamate 253. Acetyl-CoA contacts are provided by residues 257-259 (VGV) and 264-270 (QGSGLGK). A 1D-myo-inositol 2-(L-cysteinylamino)-2-deoxy-alpha-D-glucopyranoside-binding site is contributed by tyrosine 291.

This sequence belongs to the acetyltransferase family. MshD subfamily. In terms of assembly, monomer.

The catalysed reaction is 1D-myo-inositol 2-(L-cysteinylamino)-2-deoxy-alpha-D-glucopyranoside + acetyl-CoA = mycothiol + CoA + H(+). Its function is as follows. Catalyzes the transfer of acetyl from acetyl-CoA to desacetylmycothiol (Cys-GlcN-Ins) to form mycothiol. This chain is Mycothiol acetyltransferase, found in Pseudarthrobacter chlorophenolicus (strain ATCC 700700 / DSM 12829 / CIP 107037 / JCM 12360 / KCTC 9906 / NCIMB 13794 / A6) (Arthrobacter chlorophenolicus).